A 78-amino-acid chain; its full sequence is Large ribosomal subunit protein bL28 (78 aa).

The tract at residues 1 to 28 (MSRRCQVRGTKPEFGNNVSHSQRHTKRR) is disordered.

It belongs to the bacterial ribosomal protein bL28 family.

The chain is Large ribosomal subunit protein bL28 from Cutibacterium acnes (strain DSM 16379 / KPA171202) (Propionibacterium acnes).